Consider the following 67-residue polypeptide: Small ribosomal subunit protein bS21 (67 aa).

This sequence belongs to the bacterial ribosomal protein bS21 family.

This is Small ribosomal subunit protein bS21 from Nitratidesulfovibrio vulgaris (strain DP4) (Desulfovibrio vulgaris).